Here is a 119-residue protein sequence, read N- to C-terminus: Flagellar transcriptional regulator FlhD (119 aa).

It belongs to the FlhD family. Homodimer; disulfide-linked. Forms a heterohexamer composed of two FlhC and four FlhD subunits. Each FlhC binds a FlhD dimer, forming a heterotrimer, and a hexamer assembles by dimerization of two heterotrimers.

The protein resides in the cytoplasm. Functions in complex with FlhC as a master transcriptional regulator that regulates transcription of several flagellar and non-flagellar operons by binding to their promoter region. Activates expression of class 2 flagellar genes, including fliA, which is a flagellum-specific sigma factor that turns on the class 3 genes. Also regulates genes whose products function in a variety of physiological pathways. This is Flagellar transcriptional regulator FlhD from Yersinia enterocolitica.